Consider the following 157-residue polypeptide: Transcriptional regulator MraZ (157 aa).

SpoVT-AbrB domains are found at residues 7–52 (TYTM…AGGN) and 83–126 (SETL…EPER).

Belongs to the MraZ family. Forms oligomers.

It is found in the cytoplasm. The protein resides in the nucleoid. This is Transcriptional regulator MraZ from Xanthobacter autotrophicus (strain ATCC BAA-1158 / Py2).